The following is a 435-amino-acid chain: Adenylosuccinate synthetase (435 aa).

Residues 20-26 and 48-50 each bind GTP; these read GDEGKGK and GHT. The active-site Proton acceptor is aspartate 21. Mg(2+) is bound by residues aspartate 21 and glycine 48. Residues 21-24, 46-49, threonine 134, arginine 148, glutamine 229, threonine 244, and arginine 308 contribute to the IMP site; these read DEGK and NAGH. Histidine 49 serves as the catalytic Proton donor. 304–310 contacts substrate; the sequence is TTTGRPR. Residues arginine 310, 336 to 338, and 422 to 424 contribute to the GTP site; these read KVD and SMG.

The protein belongs to the adenylosuccinate synthetase family. In terms of assembly, homodimer. Requires Mg(2+) as cofactor.

It is found in the cytoplasm. The enzyme catalyses IMP + L-aspartate + GTP = N(6)-(1,2-dicarboxyethyl)-AMP + GDP + phosphate + 2 H(+). It participates in purine metabolism; AMP biosynthesis via de novo pathway; AMP from IMP: step 1/2. Functionally, plays an important role in the de novo pathway of purine nucleotide biosynthesis. Catalyzes the first committed step in the biosynthesis of AMP from IMP. This chain is Adenylosuccinate synthetase, found in Thermoplasma acidophilum (strain ATCC 25905 / DSM 1728 / JCM 9062 / NBRC 15155 / AMRC-C165).